Reading from the N-terminus, the 211-residue chain is Ribosomal RNA small subunit methyltransferase G (211 aa).

Residues glycine 75, leucine 80, 130–131, and arginine 145 contribute to the S-adenosyl-L-methionine site; that span reads VE.

It belongs to the methyltransferase superfamily. RNA methyltransferase RsmG family.

The protein localises to the cytoplasm. The enzyme catalyses guanosine(527) in 16S rRNA + S-adenosyl-L-methionine = N(7)-methylguanosine(527) in 16S rRNA + S-adenosyl-L-homocysteine. Functionally, specifically methylates the N7 position of guanine in position 527 of 16S rRNA. This is Ribosomal RNA small subunit methyltransferase G from Aromatoleum aromaticum (strain DSM 19018 / LMG 30748 / EbN1) (Azoarcus sp. (strain EbN1)).